The primary structure comprises 41 residues: Peptide Hact-SCRiP1 (41 aa).

4 cysteine pairs are disulfide-bonded: Cys5–Cys37, Cys12–Cys31, Cys19–Cys38, and Cys26–Cys39.

In terms of tissue distribution, expressed in tentacles.

It is found in the nematocyst. The protein localises to the secreted. In terms of biological role, peptide with unknown function. Does not exhibit any effect on human ion channel TRPV1 in a Xenopus laevis oocytes assay. The sequence is that of Peptide Hact-SCRiP1 from Heliofungia actiniformis (Mushroom coral).